The sequence spans 165 residues: 3-isopropylmalate dehydratase small subunit (165 aa).

Belongs to the LeuD family. LeuD type 2 subfamily. Heterodimer of LeuC and LeuD.

It carries out the reaction (2R,3S)-3-isopropylmalate = (2S)-2-isopropylmalate. It functions in the pathway amino-acid biosynthesis; L-leucine biosynthesis; L-leucine from 3-methyl-2-oxobutanoate: step 2/4. Functionally, catalyzes the isomerization between 2-isopropylmalate and 3-isopropylmalate, via the formation of 2-isopropylmaleate. The sequence is that of 3-isopropylmalate dehydratase small subunit from Lachnoclostridium phytofermentans (strain ATCC 700394 / DSM 18823 / ISDg) (Clostridium phytofermentans).